The primary structure comprises 343 residues: MPVQCSNCEQKRAVLKRPKTGHSLCKDCFFWAFEEEIHQTITSAGLFNRGETVAIGASGGKDSTVLAHVMKLLNERYDYGLKLLLLSVDEGITGYRDDSLETVKRNQQQYELPLKIVSYEELYGWTMDAIVKQVGLKNNCTFCGVFRRQALDRGAMMLNVDKICTGHNADDVAETVLMNVLRGDIARLRRCTAISTSSEGDGAIPRCKPLKYAYEKEIVLYAYFKKLDYFSTECIYSPNAYRGHARAFLKDLESVRPSAIIDVIHSGETLSVKEGVKMPVQGTCSRCGYISSQALCKSCVLLEGLNRGLPKLGIGKHHRLHGKILAQEPLTEQEERKLKAVDF.

The protein belongs to the TtcA family. CTU1/NCS6/ATPBD3 subfamily.

It is found in the cytoplasm. It participates in tRNA modification; 5-methoxycarbonylmethyl-2-thiouridine-tRNA biosynthesis. In terms of biological role, plays a central role in 2-thiolation of mcm(5)S(2)U at tRNA wobble positions of tRNA(Lys), tRNA(Glu) and tRNA(Gln). Directly binds tRNAs and probably acts by catalyzing adenylation of tRNAs, an intermediate required for 2-thiolation. It is unclear whether it acts as a sulfurtransferase that transfers sulfur from thiocarboxylated urm1 onto the uridine of tRNAs at wobble position. The protein is Cytoplasmic tRNA 2-thiolation protein 1 (ctu1) of Danio rerio (Zebrafish).